The chain runs to 1038 residues: Kinesin-like protein KIN-5B (1038 aa).

The segment at 1 to 63 (MAQTPNPSRR…GGGGGGGSEM (63 aa)) is disordered. The segment covering 24–34 (RPERRQLELRW) has biased composition (basic and acidic residues). The span at 49 to 61 (GLTGGGGGGGGGS) shows a compositional bias: gly residues. The Kinesin motor domain maps to 69–410 (NVQVVLRCRP…LDYAYRAKSI (342 aa)). Position 154 to 161 (154 to 161 (GQTGTGKT)) interacts with ATP. Residues 453–502 (QERFALEEAEKKTMRDKIEYLETQNKELKMNIESCKKEYLDLEEAHSRAN) are a coiled coil. Positions 1013-1038 (DKGKRYVDQGTRTPRSPLMPVNHYNK) are disordered.

Belongs to the TRAFAC class myosin-kinesin ATPase superfamily. Kinesin family. KIN-5/BimC subfamily.

The protein localises to the cytoplasm. Its subcellular location is the cytoskeleton. The protein resides in the spindle. Functionally, responsible for microtubule translocation. May be important for the organization of phragmoplast-specific arrays of microtubules. Plays an essential role in stabilizing the mitotic spindle. Required during mitotic cytokinesis. The protein is Kinesin-like protein KIN-5B of Oryza sativa subsp. japonica (Rice).